The primary structure comprises 365 residues: Geissoschizine synthase (365 aa).

Cys51 is a Zn(2+) binding site. Asn52 is an NADP(+) binding site. Residues His73, Glu74, Cys104, Cys107, Cys110, Cys118, and Cys169 each contribute to the Zn(2+) site. NADP(+)-binding residues include Leu195, Gly197, Leu198, Ser217, Thr218, Ser219, Lys222, Arg262, Val281, Ala283, Ser305, Thr307, and Arg352.

It belongs to the zinc-containing alcohol dehydrogenase family. Class-III subfamily. In terms of assembly, homodimer. Requires Zn(2+) as cofactor. In terms of tissue distribution, mainly expressed in roots and, to a lower level, in leaves.

The catalysed reaction is (19E)-geissoschizine + NADP(+) = 4,21-dehydrogeissoschizine + NADPH. The protein operates within alkaloid biosynthesis; ajmaline biosynthesis. Its function is as follows. Alcohol dehydrogenase involved in the biosynthesis of ajmaline-type monoterpenoid indole alkaloids (MIAs) natural products, important plant-derived pharmaceuticals used in the therapy of heart disorders. Catalyzes iminium reduction on 4,21-dehydrogeissoschizine to produce 19E-geissoschizine, precursor of vomilenine, an intermediate chemical in the biosynthesis of ajmaline. The chain is Geissoschizine synthase from Rauvolfia serpentina (Serpentine wood).